The primary structure comprises 533 residues: MEFSSFLFTILLFSLNISPLVSAHGSNHEDFLKCLSYRMNDNTVEPKVIHTSKDSSFFSILDSSIQNPRFSVSETPKPVSIITPVKASDVQTVIRCAQLHGIHVRTRSAGHCYEGLSYIAYNKPFAVIDLRNLRSISLDVDNRTGWVQTGATAGELYYEIGKTTKSLAFPAGIHPTVGVGGQFSGGGYGTLLRKYGLAADNIIDALVVDASGRILDRQAMGEDYFWAIRGGGGSSFGVILSWKVKLVDVPSTITVFKVQKTSKKEAVRIIKKWQYAADKVPDDLFIRTTLERSNKNAVHALFTGLYIGPVNNLLALMEEKFPELGLEKEGCEEMSWIESVLWFADFPKGESLGVLTNRERTSLSFKGKDDFVQEPIPEAAIQEIWRRLEAPEARLGKIILTPFGGKMSEMAEYETPFPHRGGNLYEIQYVAYWREEEDKNKTETDKYLKWVDSVYEFMTPYVSKSPRGAYVNFKDMDLGMYLGKKKTKYEEGKSWGVKYFKNNFERLVRVKTRVDPTDFFCDEQSIPLVNKVT.

The first 23 residues, 1-23 (MEFSSFLFTILLFSLNISPLVSA), serve as a signal peptide directing secretion. Cys-34 and Cys-96 are joined by a disulfide. Residues 74 to 249 (ETPKPVSIIT…LSWKVKLVDV (176 aa)) enclose the FAD-binding PCMH-type domain. The residue at position 111 (His-111) is a Pros-8alpha-FAD histidine. Residues Asn-142 and Asn-440 are each glycosylated (N-linked (GlcNAc...) asparagine).

This sequence belongs to the oxygen-dependent FAD-linked oxidoreductase family. FAD is required as a cofactor.

Its subcellular location is the secreted. The protein localises to the cell wall. Its function is as follows. Involved in adaptation to salt stress. In Arabidopsis thaliana (Mouse-ear cress), this protein is Berberine bridge enzyme-like 28.